A 445-amino-acid polypeptide reads, in one-letter code: Adenine permease AdeP (445 aa).

The Cytoplasmic portion of the chain corresponds to 1–28 (MSHQHTTQTSGQGMLERVFKLREHGTTA). A helical membrane pass occupies residues 29–52 (RTEVIAGFTTFLTMVYIVFVNPQI). At 53–62 (LGVAGMDTSA) the chain is on the periplasmic side. Residues 63–81 (VFVTTCLIAAFGSIMMGLF) traverse the membrane as a helical segment. Topologically, residues 82-83 (AN) are cytoplasmic. The chain crosses the membrane as a discontinuously helical span at residues 84–100 (LPVALAPAMGLNAFFAF). Topologically, residues 101-112 (VVVQAMGLPWQV) are periplasmic. Residues 113–132 (GMGAIFWGAIGLLLLTIFRV) form a helical membrane-spanning segment. Residues 133–144 (RYWMIANIPVSL) lie on the Cytoplasmic side of the membrane. The chain crosses the membrane as a helical span at residues 145-165 (RVGITSGIGLFIGMMGLKNAG). Residues 166 to 181 (VIVANPETLVSIGNLT) are Periplasmic-facing. Residues 182–199 (SHSVLLGILGFFIIAILA) traverse the membrane as a helical segment. The Cytoplasmic portion of the chain corresponds to 200-203 (SRNI). Residues 204 to 222 (HAAVLVSIVVTTLLGWMLG) traverse the membrane as a helical segment. The Periplasmic segment spans residues 223–250 (DVHYNGIVSAPPSVMTVVGHVDLAGSFN). The helical transmembrane segment at 251–279 (LGLAGVIFSFMLVNLFDSSGTLIGVTDKA) threads the bilayer. The Cytoplasmic segment spans residues 280–292 (GLADEKGKFPRMK). The helical transmembrane segment at 293 to 308 (QALYVDSISSVTGSFI) threads the bilayer. The Periplasmic portion of the chain corresponds to 309-310 (GT). The discontinuously helical transmembrane segment at 311-326 (SSVTAYIESSSGVSVG) threads the bilayer. At 327–330 (GRTG) the chain is on the cytoplasmic side. The chain crosses the membrane as a helical span at residues 331 to 345 (LTAVVVGLLFLLVIF). Residues 346–356 (LSPLAGMVPGY) are Periplasmic-facing. The chain crosses the membrane as a helical span at residues 357-376 (AAAGALIYVGVLMTSSLARV). At 377-381 (NWQDL) the chain is on the cytoplasmic side. An intramembrane region (discontinuously helical) is located at residues 382 to 417 (TESVPAFITAVMMPFSFSITEGIALGFISYCVMKIG). Residues 418–445 (TGRLRDLSPCVIIVALLFILKIVFIDAH) are Cytoplasmic-facing.

It belongs to the nucleobase:cation symporter-2 (NCS2) (TC 2.A.40) family. Azg-like subfamily.

The protein resides in the cell inner membrane. Internal adenine may inhibit transport. Functionally, high-affinity transporter for adenine. The sequence is that of Adenine permease AdeP (adeP) from Escherichia coli (strain K12).